Here is a 410-residue protein sequence, read N- to C-terminus: Zinc finger TRAF-type-containing protein 1 (410 aa).

Residues 1 to 13 (MSGAEEAGGGGPA) show a composition bias toward gly residues. The disordered stretch occupies residues 1 to 22 (MSGAEEAGGGGPAAGPAGSVPA). The RING-type; degenerate zinc-finger motif lies at 117–162 (CTVCLDLPKASVYQCTNGHLMCAGCFIHLLADARLKEEQATCPNCR). The TRAF-type zinc-finger motif lies at 158–231 (CPNCRCEISK…PWHGPFHELT (74 aa)).

The protein belongs to the ZFTRAF1 family. In terms of assembly, interacts with LGALS3.

The protein localises to the cytoplasm. The protein resides in the perinuclear region. This is Zinc finger TRAF-type-containing protein 1 from Bos taurus (Bovine).